Consider the following 348-residue polypeptide: Phenylalanine--tRNA ligase alpha subunit (348 aa).

E262 contacts Mg(2+).

Belongs to the class-II aminoacyl-tRNA synthetase family. Phe-tRNA synthetase alpha subunit type 1 subfamily. As to quaternary structure, tetramer of two alpha and two beta subunits. Mg(2+) serves as cofactor.

The protein resides in the cytoplasm. The enzyme catalyses tRNA(Phe) + L-phenylalanine + ATP = L-phenylalanyl-tRNA(Phe) + AMP + diphosphate + H(+). The chain is Phenylalanine--tRNA ligase alpha subunit from Streptococcus pneumoniae serotype 2 (strain D39 / NCTC 7466).